The following is a 210-amino-acid chain: Molybdenum cofactor guanylyltransferase (210 aa).

GTP-binding positions include 9–11 (LAG), K21, D66, and D95. Position 95 (D95) interacts with Mg(2+).

It belongs to the MobA family. As to quaternary structure, monomer. The cofactor is Mg(2+).

Its subcellular location is the cytoplasm. It carries out the reaction Mo-molybdopterin + GTP + H(+) = Mo-molybdopterin guanine dinucleotide + diphosphate. Functionally, transfers a GMP moiety from GTP to Mo-molybdopterin (Mo-MPT) cofactor (Moco or molybdenum cofactor) to form Mo-molybdopterin guanine dinucleotide (Mo-MGD) cofactor. This Syntrophotalea carbinolica (strain DSM 2380 / NBRC 103641 / GraBd1) (Pelobacter carbinolicus) protein is Molybdenum cofactor guanylyltransferase.